A 682-amino-acid polypeptide reads, in one-letter code: Beta-galactosidase (682 aa).

The N-terminal stretch at 1–23 (MPGFLVRILPLLLPLLLLGPTRG) is a signal peptide. The propeptide occupies 24-28 (LRNAT). N-linked (GlcNAc...) asparagine glycosylation is present at N26. Substrate contacts are provided by Y83, E129, and N187. E188 functions as the Proton donor in the catalytic mechanism. Residues C195 and C230 are joined by a disulfide bond. N247 carries an N-linked (GlcNAc...) asparagine glycan. The active-site Nucleophile is the E268. Y333 is a binding site for substrate. Residues N464, N498, N545, and N555 are each glycosylated (N-linked (GlcNAc...) asparagine). An intrachain disulfide couples C626 to C634.

The protein belongs to the glycosyl hydrolase 35 family. Homodimer. May form higher multimers.

Its subcellular location is the lysosome. The catalysed reaction is Hydrolysis of terminal non-reducing beta-D-galactose residues in beta-D-galactosides.. Functionally, cleaves beta-linked terminal galactosyl residues from gangliosides, glycoproteins, and glycosaminoglycans. The polypeptide is Beta-galactosidase (GLB1) (Macaca fascicularis (Crab-eating macaque)).